The primary structure comprises 349 residues: tRNA pseudouridine synthase D (349 aa).

Position 27 (Phe-27) interacts with substrate. Catalysis depends on Asp-80, which acts as the Nucleophile. Asn-129 lines the substrate pocket. The TRUD domain maps to 155–303 (GVPNYFGAQR…VEAARRAMLL (149 aa)). Phe-329 contacts substrate.

The protein belongs to the pseudouridine synthase TruD family.

The enzyme catalyses uridine(13) in tRNA = pseudouridine(13) in tRNA. Its function is as follows. Responsible for synthesis of pseudouridine from uracil-13 in transfer RNAs. The protein is tRNA pseudouridine synthase D of Escherichia coli (strain K12 / MC4100 / BW2952).